A 185-amino-acid polypeptide reads, in one-letter code: dCTP deaminase, dUMP-forming (185 aa).

Residues 99-104 (KSSIAR), Asp-117, 125-127 (TLE), Gln-146, Tyr-159, Lys-166, and Gln-170 each bind dCTP. Glu-127 functions as the Proton donor/acceptor in the catalytic mechanism.

The protein belongs to the dCTP deaminase family. In terms of assembly, homotrimer.

It catalyses the reaction dCTP + 2 H2O = dUMP + NH4(+) + diphosphate. The protein operates within pyrimidine metabolism; dUMP biosynthesis; dUMP from dCTP: step 1/1. In terms of biological role, bifunctional enzyme that catalyzes both the deamination of dCTP to dUTP and the hydrolysis of dUTP to dUMP without releasing the toxic dUTP intermediate. This is dCTP deaminase, dUMP-forming from Methanospirillum hungatei JF-1 (strain ATCC 27890 / DSM 864 / NBRC 100397 / JF-1).